We begin with the raw amino-acid sequence, 129 residues long: Glycine cleavage system H protein (129 aa).

A Lipoyl-binding domain is found at 24–106 (TYTVGITEHA…YADGWIFKIK (83 aa)). Lysine 65 bears the N6-lipoyllysine mark.

It belongs to the GcvH family. As to quaternary structure, the glycine cleavage system is composed of four proteins: P, T, L and H. It depends on (R)-lipoate as a cofactor.

Functionally, the glycine cleavage system catalyzes the degradation of glycine. The H protein shuttles the methylamine group of glycine from the P protein to the T protein. The protein is Glycine cleavage system H protein of Salmonella arizonae (strain ATCC BAA-731 / CDC346-86 / RSK2980).